The following is a 217-amino-acid chain: Ribonuclease T (217 aa).

Residues 20–194 (VVIDVETGGF…YDTDRTAELF (175 aa)) form the Exonuclease domain. Residues Asp-23, Glu-25, His-181, and Asp-186 each coordinate Mg(2+). His-181 (proton donor/acceptor) is an active-site residue.

It belongs to the RNase T family. As to quaternary structure, homodimer. Requires Mg(2+) as cofactor.

Its function is as follows. Trims short 3' overhangs of a variety of RNA species, leaving a one or two nucleotide 3' overhang. Responsible for the end-turnover of tRNA: specifically removes the terminal AMP residue from uncharged tRNA (tRNA-C-C-A). Also appears to be involved in tRNA biosynthesis. The sequence is that of Ribonuclease T from Photorhabdus laumondii subsp. laumondii (strain DSM 15139 / CIP 105565 / TT01) (Photorhabdus luminescens subsp. laumondii).